Reading from the N-terminus, the 495-residue chain is Cornulin (495 aa).

The 36-residue stretch at 49-84 (HDPATVDEVLRLLDEDHTGTVEFKEFLVLVFKVAQA) folds into the EF-hand domain. Ca(2+) is bound by residues D62, D64, T66, T68, and E73. 2 disordered regions span residues 96–439 (ACGS…TVVG) and 460–481 (LHTSVSSAQGQDAAQSEEKRGI). Positions 99-110 (SQESGSLHSGAS) are enriched in polar residues. Residues 137 to 151 (HRQSQQGSRGQNRPG) show a composition bias toward low complexity. The segment covering 152 to 194 (VQTQGQATGSAWVSSYDRQAESQSQERISPQIQLSGQTEQTQK) has biased composition (polar residues). Residues 196–222 (GEGKRNQTTEMRPERQPQTREQDRAHQ) show a composition bias toward basic and acidic residues. A compositionally biased stretch (low complexity) spans 226–242 (TVTGSGTQTQAGATQTV). 2 stretches are compositionally biased toward polar residues: residues 243–282 (EQDSSHQTGRTSKQTQEATNDQNRGTETHGQGRSQTSQAV) and 290–303 (QAGTHTQTPTQTVE). Positions 307-324 (SHQTGSTSTQTQESTNGQ) are enriched in low complexity. A compositionally biased stretch (polar residues) spans 334–355 (GRSQTSQAVTGGHTQIQAGSHT). The span at 374-385 (QGQTQTQPGSGQ) shows a compositional bias: low complexity. 2 stretches are compositionally biased toward polar residues: residues 403–420 (QAQTGASTESGRQEWSST) and 460–473 (LHTSVSSAQGQDAA).

This sequence belongs to the S100-fused protein family. In terms of assembly, homodimer. Expressed in the basal skin layer (at protein level). Squamous epithelia cell-specific. Expressed in the esophagus (periphery of the cells of the granular and the upper spinous layers), foreskin (granular and lower cornified cells), scalp skin (granular layer), inner root sheath of the hair follicle and in primary keratinocytes (at protein level). Expressed in the squamous epithelium of the cervix, esophagus, foreskin and larynx. Expressed in the fetal bladder and scalp skin. Expressed at very low levels in the lung, kidney, uterus, skeletal muscle, heart and fetal brain. Undetectable or barely detectable in esophageal and oral squamous cell carcinoma compared with the matched adjacent normal esophageal mucosa. Undetectable or barely detectable in larynx and esophagus from patients with pH-documented laryngopharyngeal reflux (LPR).

Its subcellular location is the cytoplasm. In terms of biological role, promotes cell proliferation, G1/S cell cycle progression and induces expression of the cell cycle regulator CCND1. Regulates proliferation induced by pro-inflammatory cytokine response via activation of NFKB1 and PI3K/AKT signaling pathways. The protein is Cornulin (CRNN) of Homo sapiens (Human).